A 72-amino-acid polypeptide reads, in one-letter code: Translation initiation factor IF-1 (72 aa).

Positions 1–72 constitute an S1-like domain; it reads MAKDDVIQMQ…SRARIVFRAK (72 aa).

Belongs to the IF-1 family. Component of the 30S ribosomal translation pre-initiation complex which assembles on the 30S ribosome in the order IF-2 and IF-3, IF-1 and N-formylmethionyl-tRNA(fMet); mRNA recruitment can occur at any time during PIC assembly.

It is found in the cytoplasm. Its function is as follows. One of the essential components for the initiation of protein synthesis. Stabilizes the binding of IF-2 and IF-3 on the 30S subunit to which N-formylmethionyl-tRNA(fMet) subsequently binds. Helps modulate mRNA selection, yielding the 30S pre-initiation complex (PIC). Upon addition of the 50S ribosomal subunit IF-1, IF-2 and IF-3 are released leaving the mature 70S translation initiation complex. This Burkholderia mallei (strain NCTC 10247) protein is Translation initiation factor IF-1.